A 129-amino-acid polypeptide reads, in one-letter code: MDRNINFSPVFIEPRFKHEFLLSPQRYFYILVFEVIVALIILNFFFKEEILYTFFPLAKPSKNSINSLLDRTMLKCEEDGSLMISRPSGIYSALSLDGSPVRISDCSLLLSSINGASSSTSPYSIFNRR.

A helical; Signal-anchor for type III membrane protein membrane pass occupies residues 27-47 (YFYILVFEVIVALIILNFFFK). An intrachain disulfide couples Cys76 to Cys106.

The protein belongs to the chordopoxvirinae L5 family. In terms of assembly, part of a stable entry-fusion complex (EFC) which is at least composed of proteins A16, A21, A28, G3, G9, H2, J5, and L5. Formation of the viral membrane is necessary for the assembly of the complex. Interacts with G3. Post-translationally, most cysteines are linked by disulfide bonds. They are created by the viral disulfide bond formation pathway, a poxvirus-specific redox pathway that operates on the cytoplasmic side of the MV membranes.

It is found in the virion membrane. Functionally, envelope protein part of the entry-fusion complex responsible for the virus membrane fusion with host cell membrane during virus entry. Also plays a role in cell-cell fusion (syncytium formation). This Fowlpox virus (strain NVSL) (FPV) protein is L5 homolog.